The following is a 464-amino-acid chain: Uronate isomerase (464 aa).

The protein belongs to the metallo-dependent hydrolases superfamily. Uronate isomerase family.

The catalysed reaction is D-glucuronate = D-fructuronate. It carries out the reaction aldehydo-D-galacturonate = keto-D-tagaturonate. Its pathway is carbohydrate metabolism; pentose and glucuronate interconversion. The protein is Uronate isomerase of Caldicellulosiruptor bescii (strain ATCC BAA-1888 / DSM 6725 / KCTC 15123 / Z-1320) (Anaerocellum thermophilum).